Here is a 369-residue protein sequence, read N- to C-terminus: Chorismate synthase (369 aa).

Positions 48 and 54 each coordinate NADP(+). FMN contacts are provided by residues 125–127, 238–239, Gly-283, 298–302, and Arg-324; these read RSS, NA, and KPTSS.

Belongs to the chorismate synthase family. Homotetramer. FMNH2 is required as a cofactor.

The catalysed reaction is 5-O-(1-carboxyvinyl)-3-phosphoshikimate = chorismate + phosphate. It functions in the pathway metabolic intermediate biosynthesis; chorismate biosynthesis; chorismate from D-erythrose 4-phosphate and phosphoenolpyruvate: step 7/7. In terms of biological role, catalyzes the anti-1,4-elimination of the C-3 phosphate and the C-6 proR hydrogen from 5-enolpyruvylshikimate-3-phosphate (EPSP) to yield chorismate, which is the branch point compound that serves as the starting substrate for the three terminal pathways of aromatic amino acid biosynthesis. This reaction introduces a second double bond into the aromatic ring system. The polypeptide is Chorismate synthase (Acidiphilium cryptum (strain JF-5)).